The primary structure comprises 199 residues: Imidazoleglycerol-phosphate dehydratase (199 aa).

Belongs to the imidazoleglycerol-phosphate dehydratase family.

The protein resides in the cytoplasm. It catalyses the reaction D-erythro-1-(imidazol-4-yl)glycerol 3-phosphate = 3-(imidazol-4-yl)-2-oxopropyl phosphate + H2O. It functions in the pathway amino-acid biosynthesis; L-histidine biosynthesis; L-histidine from 5-phospho-alpha-D-ribose 1-diphosphate: step 6/9. The protein is Imidazoleglycerol-phosphate dehydratase of Kineococcus radiotolerans (strain ATCC BAA-149 / DSM 14245 / SRS30216).